The primary structure comprises 956 residues: UvrABC system protein A (956 aa).

33 to 40 provides a ligand contact to ATP; it reads GLSGSGKS. Residues 252–279 form a C4-type zinc finger; the sequence is CPYCGFSVGELEPRMFSFNSPFGACPTC. 2 consecutive ABC transporter domains span residues 309–587 and 607–936; these read WRPI…KNSI and GNGL…KYLK. Position 639 to 646 (639 to 646) interacts with ATP; it reads GVSGSGKS. The segment at 738–764 adopts a C4-type zinc-finger fold; sequence CEACKGDGIIKIEMHFLPDVYVPCEVC.

This sequence belongs to the ABC transporter superfamily. UvrA family. In terms of assembly, forms a heterotetramer with UvrB during the search for lesions.

The protein resides in the cytoplasm. In terms of biological role, the UvrABC repair system catalyzes the recognition and processing of DNA lesions. UvrA is an ATPase and a DNA-binding protein. A damage recognition complex composed of 2 UvrA and 2 UvrB subunits scans DNA for abnormalities. When the presence of a lesion has been verified by UvrB, the UvrA molecules dissociate. In Listeria monocytogenes serotype 4b (strain F2365), this protein is UvrABC system protein A.